Consider the following 676-residue polypeptide: Potassium-transporting ATPase ATP-binding subunit (676 aa).

4 consecutive transmembrane segments (helical) span residues 24–44, 45–65, 212–232, and 246–266; these read NPVM…CFYP, MGIP…TLLF, IFLI…VPFT, and SLVI…GALI. The 4-aspartylphosphate intermediate role is filled by D302. Residues D339, E343, 372–379, and K390 contribute to the ATP site; that span reads FSAKTRMS. Positions 513 and 517 each coordinate Mg(2+). Helical transmembrane passes span 573–593, 611–631, and 656–676; these read FSIA…FYSI, AILS…PLAL, and GIIA…LIIL.

The protein belongs to the cation transport ATPase (P-type) (TC 3.A.3) family. Type IA subfamily. The system is composed of three essential subunits: KdpA, KdpB and KdpC.

It localises to the cell membrane. The catalysed reaction is K(+)(out) + ATP + H2O = K(+)(in) + ADP + phosphate + H(+). Its function is as follows. Part of the high-affinity ATP-driven potassium transport (or Kdp) system, which catalyzes the hydrolysis of ATP coupled with the electrogenic transport of potassium into the cytoplasm. This subunit is responsible for energy coupling to the transport system and for the release of the potassium ions to the cytoplasm. The chain is Potassium-transporting ATPase ATP-binding subunit from Enterococcus faecalis (strain ATCC 700802 / V583).